A 268-amino-acid chain; its full sequence is Glutamate racemase (268 aa).

Substrate is bound by residues 14–15 (DS) and 46–47 (YG). The active-site Proton donor/acceptor is the Cys78. 79–80 (NT) serves as a coordination point for substrate. Cys192 functions as the Proton donor/acceptor in the catalytic mechanism. Residue 193–194 (TH) coordinates substrate.

The protein belongs to the aspartate/glutamate racemases family.

The catalysed reaction is L-glutamate = D-glutamate. It participates in cell wall biogenesis; peptidoglycan biosynthesis. Provides the (R)-glutamate required for cell wall biosynthesis. The protein is Glutamate racemase of Sphingopyxis alaskensis (strain DSM 13593 / LMG 18877 / RB2256) (Sphingomonas alaskensis).